The following is a 220-amino-acid chain: Pro-Pro endopeptidase (220 aa).

Residues 1–26 (MRPSKKLLIAIISIFLISSVPVSAHA) form the signal peptide. Residues 35-220 (KDTLSQIVVF…TYSFLQNLAK (186 aa)) enclose the ATLF-like domain. Interacts with substrate peptide stretches follow at residues 101-103 (KGW) and 117-119 (GGS). His142 serves as a coordination point for Zn(2+). The active-site Proton acceptor is the Glu143. Zn(2+)-binding residues include His146, Tyr178, and Glu185.

This sequence belongs to the peptidase M34 family. Pro-Pro endopeptidase subfamily. In terms of assembly, monomer. The cofactor is Zn(2+).

It is found in the secreted. It carries out the reaction The enzyme catalyzes the hydrolytic cleavage of peptide bonds between two proline residues.. With respect to regulation, is inhibited by the chelating agent o-phenanthroline in vitro. Functionally, zinc-dependent endoprotease with a unique preference for proline residues surrounding the scissile bond. Exhibits a high preference for an asparagine at the P2 position and hydrophobic residues (Val, Ile, Leu) at the P3 position. Efficiently cleaves the LPXTG cell surface proteins CD630_28310 and CD630_32460 at multiple cleavage sites in vivo. Has a role in the regulation of C.difficile adhesion versus motility by cleaving surface adhesion proteins such as the collagen binding protein CD630_28310, and is important for efficient infection. Is also able to cleave fibronectin and fibrinogen in vitro; cleaves at the N-terminus of the beta-chain of fibrinogen. Destabilizes the fibronectin network produced by human fibroblasts. Therefore, may be important in key steps of clostridial pathogenesis by degrading extracellular matrix components associated with the gut epithelial cells. To a lesser extent, IgA1, IgA2, and human HSP 90-beta, but not HSP 90-alpha, are also substrates for the enzyme. Is not active on different collagen types, casein and gelatin. This Clostridioides difficile (strain 630) (Peptoclostridium difficile) protein is Pro-Pro endopeptidase.